The chain runs to 372 residues: Alanine dehydrogenase 2 (372 aa).

H95 is an active-site residue. Position 169–199 (169–199 (KVTIIGGGQAGTNAAKIALGLGADVTILDVN)) interacts with NAD(+).

Belongs to the AlaDH/PNT family.

It catalyses the reaction L-alanine + NAD(+) + H2O = pyruvate + NH4(+) + NADH + H(+). The protein operates within amino-acid degradation; L-alanine degradation via dehydrogenase pathway; NH(3) and pyruvate from L-alanine: step 1/1. In terms of biological role, may play a role in cell wall synthesis as L-alanine is an important constituent of the peptidoglycan layer. In Staphylococcus aureus (strain N315), this protein is Alanine dehydrogenase 2 (ald2).